The sequence spans 259 residues: MSYNYLKAARKIICIGRNYAAHIKELNNSTPKQPFFFLKPTSSIVTPLSSSLVKTTRPANSTFNGLNEDGTNPGPIFIPRGVKVHHEIELALIVSKHLSNVTKMKPEEVYDSISGVALALDLTARNVQDEAKKKGLPWTISKGFDTFMPISAIVSREKFSSYKSNLQDIFRVKCSVNGQLRQDGGTNLMLHPLHKILQHISTMISLEPGDIILTGTPAGVGELKPGDRVHCELLQNNDNIVDMNFECENRPGPYEFRET.

The Mg(2+) site is built by E87, E89, and D121.

It belongs to the FAH family. Mg(2+) is required as a cofactor. Requires Mn(2+) as cofactor.

The protein localises to the mitochondrion. It carries out the reaction oxaloacetate = enol-oxaloacetate. Tautomerase that converts enol-oxaloacetate, a strong inhibitor of succinate dehydrogenase, to the physiological keto form of oxaloacetate. This chain is Oxaloacetate tautomerase FMP41, mitochondrial, found in Saccharomyces cerevisiae (strain ATCC 204508 / S288c) (Baker's yeast).